Consider the following 200-residue polypeptide: Large ribosomal subunit protein uL4 (200 aa).

The disordered stretch occupies residues 42–65; that stretch reads TRAHKSRADVSGGGKKPFRQKGTG.

Belongs to the universal ribosomal protein uL4 family. As to quaternary structure, part of the 50S ribosomal subunit.

Functionally, one of the primary rRNA binding proteins, this protein initially binds near the 5'-end of the 23S rRNA. It is important during the early stages of 50S assembly. It makes multiple contacts with different domains of the 23S rRNA in the assembled 50S subunit and ribosome. In terms of biological role, forms part of the polypeptide exit tunnel. In Acinetobacter baumannii (strain AB307-0294), this protein is Large ribosomal subunit protein uL4.